The primary structure comprises 101 residues: Biogenesis of lysosome-related organelles complex 1 subunit SNN1 (101 aa).

Residues 62-100 (DSNEYKAQFKEVNNLQKRLQKITLRLKDLERRSSQLTTS) are a coiled coil.

It belongs to the SNAPIN family. As to quaternary structure, component of the biogenesis of lysosome-related organelles complex-1 (BLOC-1).

It localises to the endosome. Its function is as follows. Component of the biogenesis of lysosome-related organelles complex-1 (BLOC-1), a complex involved in endosomal cargo sorting. The polypeptide is Biogenesis of lysosome-related organelles complex 1 subunit SNN1 (SNN1) (Candida glabrata (strain ATCC 2001 / BCRC 20586 / JCM 3761 / NBRC 0622 / NRRL Y-65 / CBS 138) (Yeast)).